A 320-amino-acid chain; its full sequence is Protoheme IX farnesyltransferase 1 (320 aa).

Transmembrane regions (helical) follow at residues 34–54, 58–78, 112–132, 135–155, 160–180, 189–209, 234–254, 255–275, and 299–319; these read GIII…FASA, LTGL…AFVM, AMIL…LYSL, LTAF…TVWV, VWST…GYCA, AVLL…AIGI, IKMM…PFSL, GTGH…GIWI, and LIYF…MFLI.

Belongs to the UbiA prenyltransferase family. Protoheme IX farnesyltransferase subfamily. Interacts with CtaA.

It is found in the cell membrane. It catalyses the reaction heme b + (2E,6E)-farnesyl diphosphate + H2O = Fe(II)-heme o + diphosphate. Its pathway is porphyrin-containing compound metabolism; heme O biosynthesis; heme O from protoheme: step 1/1. Its function is as follows. Converts heme B (protoheme IX) to heme O by substitution of the vinyl group on carbon 2 of heme B porphyrin ring with a hydroxyethyl farnesyl side group. This chain is Protoheme IX farnesyltransferase 1 (ctaB1), found in Bacillus subtilis (strain 168).